Consider the following 360-residue polypeptide: Membrane-bound lytic murein transglycosylase C (360 aa).

The signal sequence occupies residues 1 to 16 (MKKFFALALVAPLLIS). C17 carries the N-palmitoyl cysteine lipid modification. C17 carries S-diacylglycerol cysteine lipidation.

Belongs to the transglycosylase Slt family.

The protein localises to the cell outer membrane. It catalyses the reaction Exolytic cleavage of the (1-&gt;4)-beta-glycosidic linkage between N-acetylmuramic acid (MurNAc) and N-acetylglucosamine (GlcNAc) residues in peptidoglycan, from either the reducing or the non-reducing ends of the peptidoglycan chains, with concomitant formation of a 1,6-anhydrobond in the MurNAc residue.. Murein-degrading enzyme. May play a role in recycling of muropeptides during cell elongation and/or cell division. The sequence is that of Membrane-bound lytic murein transglycosylase C from Citrobacter koseri (strain ATCC BAA-895 / CDC 4225-83 / SGSC4696).